The chain runs to 186 residues: Transcription factor FapR (186 aa).

The protein belongs to the FapR family.

Transcriptional factor involved in regulation of membrane lipid biosynthesis by repressing genes involved in fatty acid and phospholipid metabolism. The polypeptide is Transcription factor FapR (Halalkalibacterium halodurans (strain ATCC BAA-125 / DSM 18197 / FERM 7344 / JCM 9153 / C-125) (Bacillus halodurans)).